A 142-amino-acid chain; its full sequence is COA8 family protein CBG23705, mitochondrial (142 aa).

This sequence belongs to the COA8 family.

The protein resides in the mitochondrion inner membrane. Functionally, may be required for cytochrome c complex (COX) assembly and function, COX being the terminal component of the mitochondrial respiratory chain. The polypeptide is COA8 family protein CBG23705, mitochondrial (Caenorhabditis briggsae).